We begin with the raw amino-acid sequence, 40 residues long: Photosystem II reaction center protein J (40 aa).

Residues 8–28 (IPLWLIGTLTGILVIGLIGIF) traverse the membrane as a helical segment.

The protein belongs to the PsbJ family. PSII is composed of 1 copy each of membrane proteins PsbA, PsbB, PsbC, PsbD, PsbE, PsbF, PsbH, PsbI, PsbJ, PsbK, PsbL, PsbM, PsbT, PsbX, PsbY, PsbZ, Psb30/Ycf12, at least 3 peripheral proteins of the oxygen-evolving complex and a large number of cofactors. It forms dimeric complexes.

It localises to the plastid. The protein resides in the chloroplast thylakoid membrane. Functionally, one of the components of the core complex of photosystem II (PSII). PSII is a light-driven water:plastoquinone oxidoreductase that uses light energy to abstract electrons from H(2)O, generating O(2) and a proton gradient subsequently used for ATP formation. It consists of a core antenna complex that captures photons, and an electron transfer chain that converts photonic excitation into a charge separation. This Phalaenopsis aphrodite subsp. formosana (Moth orchid) protein is Photosystem II reaction center protein J.